The primary structure comprises 912 residues: Glutamate receptor 3.2 (912 aa).

The signal sequence occupies residues 1-22 (MFWVLVLLSFIVLIGDGMISEG). Residues 23–587 (AGLRPRYVDV…TPWAFLRPFT (565 aa)) lie on the Extracellular side of the membrane. Residues Asn-306, Asn-338, Asn-378, Asn-417, Asn-435, Asn-445, and Asn-532 are each glycosylated (N-linked (GlcNAc...) asparagine). Glycine contacts are provided by residues 544–546 (DIA) and Arg-551. L-methionine is bound by residues 544–546 (DIA) and Arg-551. Residues 588 to 608 (PPMWAVTAAFFLIVGSVIWIL) form a helical membrane-spanning segment. Over 609–617 (EHRINDEFR) the chain is Cytoplasmic. The chain crosses the membrane as a helical span at residues 618-638 (GPPRKQIVTILWFSFSTMFFS). Residues 639-649 (HRENTVSTLGR) lie on the Cytoplasmic side of the membrane. Residues 650–670 (AVLLIWLFVVLIITSSYTASL) traverse the membrane as a helical segment. Residues 671-828 (TSILTVQQLN…EDSEQLKLRS (158 aa)) are Extracellular-facing. Residue Tyr-703 participates in glycine binding. Residue Tyr-703 participates in L-methionine binding. The N-linked (GlcNAc...) asparagine glycan is linked to Asn-734. A glycine-binding site is contributed by 743-746 (ERPY). 743–746 (ERPY) serves as a coordination point for L-methionine. Cys-755 and Cys-809 are oxidised to a cystine. N-linked (GlcNAc...) asparagine glycosylation is found at Asn-808 and Asn-813. Residues 829–849 (FWGLFLVCGISCFIALFIYFF) traverse the membrane as a helical segment. The Cytoplasmic segment spans residues 850 to 912 (KIVRDFFRHG…DLSLKPSRPI (63 aa)). A disordered region spans residues 888-912 (KEDESKRRMKRKRNDDLSLKPSRPI).

Belongs to the glutamate-gated ion channel (TC 1.A.10.1) family. Forms a heteromeric channel with GLR3.4. Expressed in leaves and siliques, and at lower level in flowers and roots. Detected in the vascular tissues of both shoots and roots. Expressed in root phloem.

The protein resides in the cell membrane. Its function is as follows. Glutamate-gated receptor that probably acts as a non-selective cation channel. May be involved in light-signal transduction and calcium homeostasis via the regulation of calcium influx into cells. Could play a role in calcium unloading from the xylem vessels. Acts as a negative regulator of lateral root initiation and development. May restrict primordia numbers and position along the root axis by a signaling process originating in the phloem. The polypeptide is Glutamate receptor 3.2 (Arabidopsis thaliana (Mouse-ear cress)).